We begin with the raw amino-acid sequence, 101 residues long: Small ribosomal subunit protein uS14 (101 aa).

Basic and acidic residues predominate over residues 1–10 (MAKKSSIEKN). A disordered region spans residues 1–25 (MAKKSSIEKNNRRKKMAKNAAPKRE).

The protein belongs to the universal ribosomal protein uS14 family. In terms of assembly, part of the 30S ribosomal subunit. Contacts proteins S3 and S10.

In terms of biological role, binds 16S rRNA, required for the assembly of 30S particles and may also be responsible for determining the conformation of the 16S rRNA at the A site. In Rhodopseudomonas palustris (strain BisA53), this protein is Small ribosomal subunit protein uS14.